A 199-amino-acid chain; its full sequence is LexA repressor (199 aa).

The segment at residues 28–47 (IRDIAKHFKLTPRGAHIHVI) is a DNA-binding region (H-T-H motif). Residues Ser120 and Lys157 each act as for autocatalytic cleavage activity in the active site.

This sequence belongs to the peptidase S24 family. In terms of assembly, homodimer.

It catalyses the reaction Hydrolysis of Ala-|-Gly bond in repressor LexA.. In terms of biological role, represses a number of genes involved in the response to DNA damage (SOS response), including recA and lexA. In the presence of single-stranded DNA, RecA interacts with LexA causing an autocatalytic cleavage which disrupts the DNA-binding part of LexA, leading to derepression of the SOS regulon and eventually DNA repair. The sequence is that of LexA repressor from Thermosipho melanesiensis (strain DSM 12029 / CIP 104789 / BI429).